Reading from the N-terminus, the 34-residue chain is Photosystem II reaction center protein M (34 aa).

A helical transmembrane segment spans residues isoleucine 5–leucine 25.

The protein belongs to the PsbM family. PSII is composed of 1 copy each of membrane proteins PsbA, PsbB, PsbC, PsbD, PsbE, PsbF, PsbH, PsbI, PsbJ, PsbK, PsbL, PsbM, PsbT, PsbX, PsbY, PsbZ, Psb30/Ycf12, at least 3 peripheral proteins of the oxygen-evolving complex and a large number of cofactors. It forms dimeric complexes.

The protein localises to the plastid. The protein resides in the chloroplast thylakoid membrane. One of the components of the core complex of photosystem II (PSII). PSII is a light-driven water:plastoquinone oxidoreductase that uses light energy to abstract electrons from H(2)O, generating O(2) and a proton gradient subsequently used for ATP formation. It consists of a core antenna complex that captures photons, and an electron transfer chain that converts photonic excitation into a charge separation. This subunit is found at the monomer-monomer interface. The chain is Photosystem II reaction center protein M from Nephroselmis olivacea (Green alga).